The primary structure comprises 330 residues: Elongation factor Ts (330 aa).

The involved in Mg(2+) ion dislocation from EF-Tu stretch occupies residues 79–82 (TDFV).

Belongs to the EF-Ts family.

Its subcellular location is the cytoplasm. Associates with the EF-Tu.GDP complex and induces the exchange of GDP to GTP. It remains bound to the aminoacyl-tRNA.EF-Tu.GTP complex up to the GTP hydrolysis stage on the ribosome. This is Elongation factor Ts from Bacteroides thetaiotaomicron (strain ATCC 29148 / DSM 2079 / JCM 5827 / CCUG 10774 / NCTC 10582 / VPI-5482 / E50).